Here is a 199-residue protein sequence, read N- to C-terminus: Ribonuclease HII (199 aa).

The RNase H type-2 domain maps to G14–R199. The a divalent metal cation site is built by D20, E21, and D112.

It belongs to the RNase HII family. It depends on Mn(2+) as a cofactor. Requires Mg(2+) as cofactor.

Its subcellular location is the cytoplasm. It carries out the reaction Endonucleolytic cleavage to 5'-phosphomonoester.. Endonuclease that specifically degrades the RNA of RNA-DNA hybrids. In Polaromonas sp. (strain JS666 / ATCC BAA-500), this protein is Ribonuclease HII.